We begin with the raw amino-acid sequence, 559 residues long: Formate--tetrahydrofolate ligase (559 aa).

68–75 contacts ATP; that stretch reads TPAGEGKT.

This sequence belongs to the formate--tetrahydrofolate ligase family.

The enzyme catalyses (6S)-5,6,7,8-tetrahydrofolate + formate + ATP = (6R)-10-formyltetrahydrofolate + ADP + phosphate. The protein operates within one-carbon metabolism; tetrahydrofolate interconversion. The sequence is that of Formate--tetrahydrofolate ligase from Rhizobium johnstonii (strain DSM 114642 / LMG 32736 / 3841) (Rhizobium leguminosarum bv. viciae).